Here is a 447-residue protein sequence, read N- to C-terminus: UDP-N-acetylmuramate--L-alanine ligase (447 aa).

108–114 is an ATP binding site; the sequence is GSHGKTS.

This sequence belongs to the MurCDEF family.

The protein localises to the cytoplasm. It catalyses the reaction UDP-N-acetyl-alpha-D-muramate + L-alanine + ATP = UDP-N-acetyl-alpha-D-muramoyl-L-alanine + ADP + phosphate + H(+). The protein operates within cell wall biogenesis; peptidoglycan biosynthesis. Its function is as follows. Cell wall formation. The chain is UDP-N-acetylmuramate--L-alanine ligase from Listeria welshimeri serovar 6b (strain ATCC 35897 / DSM 20650 / CCUG 15529 / CIP 8149 / NCTC 11857 / SLCC 5334 / V8).